The following is a 616-amino-acid chain: Dihydroxy-acid dehydratase (616 aa).

Mg(2+) is bound at residue Asp-81. Cys-122 contacts [2Fe-2S] cluster. Residues Asp-123 and Lys-124 each coordinate Mg(2+). An N6-carboxylysine modification is found at Lys-124. A [2Fe-2S] cluster-binding site is contributed by Cys-195. Glu-491 contributes to the Mg(2+) binding site. Ser-517 functions as the Proton acceptor in the catalytic mechanism.

It belongs to the IlvD/Edd family. As to quaternary structure, homodimer. Requires [2Fe-2S] cluster as cofactor. Mg(2+) serves as cofactor.

It carries out the reaction (2R)-2,3-dihydroxy-3-methylbutanoate = 3-methyl-2-oxobutanoate + H2O. The catalysed reaction is (2R,3R)-2,3-dihydroxy-3-methylpentanoate = (S)-3-methyl-2-oxopentanoate + H2O. It participates in amino-acid biosynthesis; L-isoleucine biosynthesis; L-isoleucine from 2-oxobutanoate: step 3/4. It functions in the pathway amino-acid biosynthesis; L-valine biosynthesis; L-valine from pyruvate: step 3/4. Functionally, functions in the biosynthesis of branched-chain amino acids. Catalyzes the dehydration of (2R,3R)-2,3-dihydroxy-3-methylpentanoate (2,3-dihydroxy-3-methylvalerate) into 2-oxo-3-methylpentanoate (2-oxo-3-methylvalerate) and of (2R)-2,3-dihydroxy-3-methylbutanoate (2,3-dihydroxyisovalerate) into 2-oxo-3-methylbutanoate (2-oxoisovalerate), the penultimate precursor to L-isoleucine and L-valine, respectively. This is Dihydroxy-acid dehydratase from Escherichia coli O1:K1 / APEC.